We begin with the raw amino-acid sequence, 591 residues long: Isocitrate dehydrogenase kinase/phosphatase (591 aa).

ATP is bound by residues 315–321 (APGVKGM) and K336. The active site involves D371.

It belongs to the AceK family.

The protein localises to the cytoplasm. It carries out the reaction L-seryl-[isocitrate dehydrogenase] + ATP = O-phospho-L-seryl-[isocitrate dehydrogenase] + ADP + H(+). Functionally, bifunctional enzyme which can phosphorylate or dephosphorylate isocitrate dehydrogenase (IDH) on a specific serine residue. This is a regulatory mechanism which enables bacteria to bypass the Krebs cycle via the glyoxylate shunt in response to the source of carbon. When bacteria are grown on glucose, IDH is fully active and unphosphorylated, but when grown on acetate or ethanol, the activity of IDH declines drastically concomitant with its phosphorylation. This is Isocitrate dehydrogenase kinase/phosphatase from Pectobacterium carotovorum subsp. carotovorum (strain PC1).